A 250-amino-acid polypeptide reads, in one-letter code: 2,3-bisphosphoglycerate-dependent phosphoglycerate mutase (250 aa).

Residues 10–17, 23–24, arginine 62, 89–92, lysine 100, 116–117, and 185–186 contribute to the substrate site; these read RHGESQWN, TG, ERHY, RR, and GN. Histidine 11 functions as the Tele-phosphohistidine intermediate in the catalytic mechanism. The Proton donor/acceptor role is filled by glutamate 89.

Belongs to the phosphoglycerate mutase family. BPG-dependent PGAM subfamily. As to quaternary structure, homodimer.

The catalysed reaction is (2R)-2-phosphoglycerate = (2R)-3-phosphoglycerate. The protein operates within carbohydrate degradation; glycolysis; pyruvate from D-glyceraldehyde 3-phosphate: step 3/5. Functionally, catalyzes the interconversion of 2-phosphoglycerate and 3-phosphoglycerate. This is 2,3-bisphosphoglycerate-dependent phosphoglycerate mutase from Klebsiella pneumoniae (strain 342).